A 296-amino-acid polypeptide reads, in one-letter code: Glycine--tRNA ligase alpha subunit (296 aa).

The protein belongs to the class-II aminoacyl-tRNA synthetase family. As to quaternary structure, tetramer of two alpha and two beta subunits.

Its subcellular location is the cytoplasm. The enzyme catalyses tRNA(Gly) + glycine + ATP = glycyl-tRNA(Gly) + AMP + diphosphate. This is Glycine--tRNA ligase alpha subunit from Desulfitobacterium hafniense (strain DSM 10664 / DCB-2).